Consider the following 199-residue polypeptide: Protein extra-macrochaetae (199 aa).

The 53-residue stretch at 23–75 folds into the bHLH domain; that stretch reads RIQRHPTHRGDGENAEMKMYLSKLKDLVPFMPKNRKLTKLEIIQHVIDYICDL. S106 is modified (phosphoserine). The segment at 127–199 is disordered; sequence RLNAEQPAKV…QNAEKDSRQS (73 aa). The span at 161 to 182 shows a compositional bias: low complexity; that stretch reads QQHQQQQQLQLQQQQLQSQQQL.

Heterodimer with other HLH proteins.

The protein resides in the nucleus. Its function is as follows. Participates in sensory organ patterning by antagonizing the neurogenic activity of the Achaete-scute complex (AS-C). It lacks a basic DNA-binding domain but is able to form heterodimers with other HLH proteins, thereby inhibiting DNA binding. May sequester proneural proteins in complexes inefficient for DNA interaction. EMC also affects vein differentiation. Inhibits the activity of AS-C proteins by forming an non-DNA binding heterodimer. This chain is Protein extra-macrochaetae (emc), found in Drosophila melanogaster (Fruit fly).